Reading from the N-terminus, the 135-residue chain is Large-conductance mechanosensitive channel (135 aa).

Helical transmembrane passes span 10-30 (FAMR…GAFG) and 76-96 (GSFI…FCVI).

It belongs to the MscL family. In terms of assembly, homopentamer.

It is found in the cell inner membrane. In terms of biological role, channel that opens in response to stretch forces in the membrane lipid bilayer. May participate in the regulation of osmotic pressure changes within the cell. The polypeptide is Large-conductance mechanosensitive channel (Campylobacter concisus (strain 13826)).